The chain runs to 156 residues: Ecotin (156 aa).

Residues 1–19 form the signal peptide; it reads MKALLIAAGVAALSSTAMA. A disulfide bridge connects residues C65 and C102.

Belongs to the protease inhibitor I11 (ecotin) family. Homodimer.

The protein resides in the periplasm. Functionally, general inhibitor of family S1 serine proteases. The sequence is that of Ecotin from Pseudomonas aeruginosa (strain UCBPP-PA14).